The chain runs to 156 residues: Crossover junction endodeoxyribonuclease RuvC (156 aa).

Residues aspartate 7, glutamate 66, and aspartate 138 contribute to the active site. Residues aspartate 7, glutamate 66, and aspartate 138 each coordinate Mg(2+).

The protein belongs to the RuvC family. In terms of assembly, homodimer which binds Holliday junction (HJ) DNA. The HJ becomes 2-fold symmetrical on binding to RuvC with unstacked arms; it has a different conformation from HJ DNA in complex with RuvA. In the full resolvosome a probable DNA-RuvA(4)-RuvB(12)-RuvC(2) complex forms which resolves the HJ. It depends on Mg(2+) as a cofactor.

Its subcellular location is the cytoplasm. It catalyses the reaction Endonucleolytic cleavage at a junction such as a reciprocal single-stranded crossover between two homologous DNA duplexes (Holliday junction).. The RuvA-RuvB-RuvC complex processes Holliday junction (HJ) DNA during genetic recombination and DNA repair. Endonuclease that resolves HJ intermediates. Cleaves cruciform DNA by making single-stranded nicks across the HJ at symmetrical positions within the homologous arms, yielding a 5'-phosphate and a 3'-hydroxyl group; requires a central core of homology in the junction. The consensus cleavage sequence is 5'-(A/T)TT(C/G)-3'. Cleavage occurs on the 3'-side of the TT dinucleotide at the point of strand exchange. HJ branch migration catalyzed by RuvA-RuvB allows RuvC to scan DNA until it finds its consensus sequence, where it cleaves and resolves the cruciform DNA. The chain is Crossover junction endodeoxyribonuclease RuvC from Ehrlichia canis (strain Jake).